The sequence spans 901 residues: Probable inorganic carbon transporter subunit DabA (901 aa).

Residues cysteine 424, aspartate 426, histidine 606, and cysteine 621 each contribute to the Zn(2+) site.

This sequence belongs to the inorganic carbon transporter (TC 9.A.2) DabA family. As to quaternary structure, forms a complex with DabB. The cofactor is Zn(2+).

The protein localises to the cell membrane. Part of an energy-coupled inorganic carbon pump. In Staphylococcus aureus (strain USA300), this protein is Probable inorganic carbon transporter subunit DabA.